Consider the following 570-residue polypeptide: Molecular chaperone MKKS (570 aa).

192-199 serves as a coordination point for ATP; that stretch reads GHIILGKS. A substrate-binding apical domain region spans residues 198–370; it reads KSLIVPLKGQ…FHLIPNEATI (173 aa).

The protein belongs to the TCP-1 chaperonin family. As to quaternary structure, component of a complex composed at least of MKKS, BBS10, BBS12, TCP1, CCT2, CCT3, CCT4, CCT5 and CCT8. Interacts with STUB1. Interacts with BBS2 (via coiled coil domain). Interacts with CCDC28B. Interacts with BBS12. Interacts with SMARCC1, a component of the SWI/SNF complexes; the interaction takes place predominantly in the cytoplasm and may modulate SMARCC1 location. Interacts with DLEC1.

It is found in the cytoplasm. Its subcellular location is the cytoskeleton. The protein resides in the microtubule organizing center. The protein localises to the centrosome. It localises to the cytosol. It is found in the nucleus. In terms of biological role, probable molecular chaperone that assists the folding of proteins upon ATP hydrolysis. Plays a role in the assembly of BBSome, a complex involved in ciliogenesis regulating transports vesicles to the cilia. May play a role in protein processing in limb, cardiac and reproductive system development. May play a role in cytokinesis. This Pongo abelii (Sumatran orangutan) protein is Molecular chaperone MKKS (MKKS).